The chain runs to 72 residues: UPF0270 protein Ent638_3781 (72 aa).

Belongs to the UPF0270 family.

The polypeptide is UPF0270 protein Ent638_3781 (Enterobacter sp. (strain 638)).